Reading from the N-terminus, the 317-residue chain is Phosphatidylglycerol--prolipoprotein diacylglyceryl transferase 2 (317 aa).

Helical transmembrane passes span 19–39 (IPLR…VWLG), 51–71 (GVIA…GRLY), 93–113 (VWEG…GAWI), and 120–140 (IPLP…QAIG). Arg141 provides a ligand contact to a 1,2-diacyl-sn-glycero-3-phospho-(1'-sn-glycerol). 3 helical membrane passes run 180-200 (PTFL…LWAA), 211-230 (FALY…YLRI), and 241-261 (LNNW…VVSA). The disordered stretch occupies residues 275–317 (GAGADGRTDDPRPADASVGLASGPPGNSTPRRATESWNVRNRS). Residues 299-317 (PGNSTPRRATESWNVRNRS) show a composition bias toward polar residues.

The protein belongs to the Lgt family.

The protein resides in the cell membrane. The catalysed reaction is L-cysteinyl-[prolipoprotein] + a 1,2-diacyl-sn-glycero-3-phospho-(1'-sn-glycerol) = an S-1,2-diacyl-sn-glyceryl-L-cysteinyl-[prolipoprotein] + sn-glycerol 1-phosphate + H(+). It functions in the pathway protein modification; lipoprotein biosynthesis (diacylglyceryl transfer). Catalyzes the transfer of the diacylglyceryl group from phosphatidylglycerol to the sulfhydryl group of the N-terminal cysteine of a prolipoprotein, the first step in the formation of mature lipoproteins. The protein is Phosphatidylglycerol--prolipoprotein diacylglyceryl transferase 2 of Streptomyces coelicolor (strain ATCC BAA-471 / A3(2) / M145).